A 144-amino-acid polypeptide reads, in one-letter code: UPF0102 protein Veis_0630 (144 aa).

A disordered region spans residues 11–31 (PPAAAPGPAPAPASAATASER).

It belongs to the UPF0102 family.

This chain is UPF0102 protein Veis_0630, found in Verminephrobacter eiseniae (strain EF01-2).